The following is a 1802-amino-acid chain: U3 small nucleolar RNA-associated protein 10 (1802 aa).

The HEAT 1 repeat unit spans residues 581-618; it reads MDLQALLPFVLVTLADPSERVRREAAGILTIIGSLHKN. 2 helical membrane passes run 946–966 and 1002–1022; these read VQSG…AIVN and ALLL…HSVM. HEAT repeat units lie at residues 1046–1083, 1253–1290, 1297–1335, and 1758–1795; these read QTID…AFEH, LSLV…QNPE, TRML…KYGK, and ALLP…VLGE.

Belongs to the HEATR1/UTP10 family. As to quaternary structure, component of the ribosomal small subunit (SSU) processome.

Its subcellular location is the nucleus. The protein localises to the nucleolus. It is found in the membrane. Functionally, involved in nucleolar processing of pre-18S ribosomal RNA. Involved in ribosome biosynthesis. The sequence is that of U3 small nucleolar RNA-associated protein 10 from Aspergillus oryzae (strain ATCC 42149 / RIB 40) (Yellow koji mold).